Consider the following 416-residue polypeptide: S-adenosylmethionine synthase (416 aa).

Residue His-14 coordinates ATP. Asp-16 lines the Mg(2+) pocket. Glu-42 contributes to the K(+) binding site. The L-methionine site is built by Glu-55 and Gln-98. A flexible loop region spans residues 98–108 (QSPDIARGVDT). ATP-binding positions include 173–175 (DGK), 249–250 (KF), Asp-258, 264–265 (RK), Ala-281, and Lys-285. Residue Asp-258 coordinates L-methionine. Lys-289 contributes to the L-methionine binding site.

Belongs to the AdoMet synthase family. As to quaternary structure, homotetramer; dimer of dimers. Requires Mg(2+) as cofactor. K(+) is required as a cofactor.

The protein resides in the cytoplasm. It carries out the reaction L-methionine + ATP + H2O = S-adenosyl-L-methionine + phosphate + diphosphate. Its pathway is amino-acid biosynthesis; S-adenosyl-L-methionine biosynthesis; S-adenosyl-L-methionine from L-methionine: step 1/1. Functionally, catalyzes the formation of S-adenosylmethionine (AdoMet) from methionine and ATP. The overall synthetic reaction is composed of two sequential steps, AdoMet formation and the subsequent tripolyphosphate hydrolysis which occurs prior to release of AdoMet from the enzyme. This is S-adenosylmethionine synthase from Thermosynechococcus vestitus (strain NIES-2133 / IAM M-273 / BP-1).